Consider the following 445-residue polypeptide: Cytochrome P450 monooxygenase penB (445 aa).

Cys381 lines the heme pocket.

The protein belongs to the cytochrome P450 family. Heme serves as cofactor.

It participates in secondary metabolite biosynthesis. The protein operates within alkaloid biosynthesis. It functions in the pathway mycotoxin biosynthesis. In terms of biological role, cytochrome P450 monooxygenase; part of the gene cluster that mediates the biosynthesis of penigequinolones, potent insecticidal alkaloids that contain a highly modified 10-carbon prenyl group. The first stage is catalyzed by the nonribosomal peptide synthetase penN that condenses anthranilic acid and O-methyl-L-tyrosine to produce 4'-methoxycyclopeptin. 4'-methoxycyclopeptin is then converted to 4'-methoxydehydrocyclopeptin by the ketoglutarate-dependent dioxygenase penM through dehydrogenation to form a double bond between C-alpha and C-beta of the O-methyltyrosine side chain. PenM also converts its first product methoxydehydrocyclopeptin to 4'-methoxycyclopenin. The following conversion of 4'methoxycyclopenin into 4'-methoxyviridicatin is catalyzed by the cyclopenase penL. 4'-methoxyviridicatin is the precursor of quinolone natural products, and is further converted to quinolinone B. The prenyltransferase penI then catalyzes the canonical Friedel-Crafts alkylation of quinolinone B with dimethylallyl cation to yield dimethylallyl quinolone, which is subjected to FAD-dependent dehydrogenation by the FAD-linked oxidoreductase penH to yield conjugated aryl diene. The delta(3') double bond then serves as the site of the second alkylation with DMAPP catalyzed by the prenyltransferase penG to yield a carbenium ion intermediate, which can be attacked by H(2)O to yield a styrenyl quinolone containing a C3'-hydroxyprenyl chain, or undergo cyclization to yield yaequinolones J1 and J2. The conversion of the styrenyl quinolone into the tetrahydrofuran-containing yaequinolone C is performed by the FAD-dependent monooxygenase penE and involves epoxidation of the terminal C7'-C8' olefin, followed by epoxide ring opening initiated by the C3' hydroxyl group. The predicted cysteine hydrolase penJ acts as an epoxide hydrolase that enhances the rate of the 5-exo-tet cyclization step, increasing the yield of yaequinolone C. PenF catalyzes the cationic rearrangement of the epoxide formed by penE (before ring opening to produce yaequinolone C) into yaequinolone D. Finally, the short-chain dehydrogenase/reductase (SDR)-like reductase penD, catalyzes both the dehydration of yaequinolone D and the reduction of the resulting oxonium to yield penigequinolone. This is Cytochrome P450 monooxygenase penB from Penicillium thymicola.